Consider the following 152-residue polypeptide: Transcriptional regulator MraZ (152 aa).

2 SpoVT-AbrB domains span residues 5–52 and 81–124; these read ASSL…PLAQ and ATEY…DEAR.

It belongs to the MraZ family. In terms of assembly, forms oligomers.

Its subcellular location is the cytoplasm. The protein localises to the nucleoid. This Pseudoalteromonas translucida (strain TAC 125) protein is Transcriptional regulator MraZ.